Reading from the N-terminus, the 282-residue chain is MTEFTTLLQQGNAWFFIPSAILLGALHGLEPGHSKTMMAAFIIAIKGTIKQAVMLGLAATISHTAVVWLIAFGGMVISKRFTAQSAEPWLQLISAVIIIGTAFWMFWRTWRGERNWLENMHGHDYEHHHHHHDHEHHQDHEHHHDQGHHHHHEHGEYQDAHARAHANDIKRRFDGREVINWQILLFGLTGGFIPCPAAITVLLICIQLKALTLGATLVVSFSIGLALTLVTVGVGAAISVQQVAKRWSGFNTLAKRAPYFSSLLIGLVGVYMGVHGFMGIMR.

The Periplasmic segment spans residues 1–12 (MTEFTTLLQQGN). Residues 13–33 (AWFFIPSAILLGALHGLEPGH) form a helical membrane-spanning segment. The Cytoplasmic portion of the chain corresponds to 34-56 (SKTMMAAFIIAIKGTIKQAVMLG). Residues 57–77 (LAATISHTAVVWLIAFGGMVI) form a helical membrane-spanning segment. At 78 to 86 (SKRFTAQSA) the chain is on the periplasmic side. The helical transmembrane segment at 87 to 107 (EPWLQLISAVIIIGTAFWMFW) threads the bilayer. The Cytoplasmic segment spans residues 108 to 182 (RTWRGERNWL…FDGREVINWQ (75 aa)). A disordered region spans residues 127–161 (HHHHHHDHEHHQDHEHHHDQGHHHHHEHGEYQDAH). Basic and acidic residues predominate over residues 135 to 144 (EHHQDHEHHH). A helical membrane pass occupies residues 183–203 (ILLFGLTGGFIPCPAAITVLL). The Periplasmic portion of the chain corresponds to 204 to 217 (ICIQLKALTLGATL). The chain crosses the membrane as a helical span at residues 218 to 238 (VVSFSIGLALTLVTVGVGAAI). Residues 239-259 (SVQQVAKRWSGFNTLAKRAPY) lie on the Cytoplasmic side of the membrane. The chain crosses the membrane as a helical span at residues 260–280 (FSSLLIGLVGVYMGVHGFMGI). Residues 281–282 (MR) lie on the Periplasmic side of the membrane.

Belongs to the NiCoT transporter (TC 2.A.52) family. RcnA subfamily.

Its subcellular location is the cell inner membrane. Functionally, efflux system for nickel and cobalt. The sequence is that of Nickel/cobalt efflux system RcnA (rcnA) from Shigella flexneri serotype 5b (strain 8401).